Reading from the N-terminus, the 908-residue chain is NADH-quinone oxidoreductase subunit G (908 aa).

The 2Fe-2S ferredoxin-type domain occupies 2 to 83 (ATIHVDGKEY…GTFISIDDEE (82 aa)). Residues C34, C45, C48, and C67 each coordinate [2Fe-2S] cluster. The 4Fe-4S His(Cys)3-ligated-type domain maps to 83–122 (EAKQFRESVVEWLMTNHPHDCPVCEEGGNCHLQDMTVMTG). [4Fe-4S] cluster contacts are provided by H99, C103, C106, C112, C151, C154, C157, C201, C228, C231, C235, and C263. The 4Fe-4S Mo/W bis-MGD-type domain occupies 221–277 (MQFAPSICQQCSIGCNISPGERYGELRRIENRYNGTVNHYFLCDRGRFGYGYVNLKD).

It belongs to the complex I 75 kDa subunit family. In terms of assembly, composed of 13 different subunits. Subunits NuoCD, E, F, and G constitute the peripheral sector of the complex. [2Fe-2S] cluster serves as cofactor. Requires [4Fe-4S] cluster as cofactor.

It localises to the cytoplasm. Its subcellular location is the cell inner membrane. It carries out the reaction a quinone + NADH + 5 H(+)(in) = a quinol + NAD(+) + 4 H(+)(out). Functionally, NDH-1 shuttles electrons from NADH, via FMN and iron-sulfur (Fe-S) centers, to quinones in the respiratory chain. The immediate electron acceptor for the enzyme in this species is believed to be ubiquinone. Couples the redox reaction to proton translocation (for every two electrons transferred, four hydrogen ions are translocated across the cytoplasmic membrane), and thus conserves the redox energy in a proton gradient. In Escherichia coli (strain K12), this protein is NADH-quinone oxidoreductase subunit G (nuoG).